The sequence spans 696 residues: Divalent metal transporter 1 (696 aa).

Residues 1-31 (MHQDNSMRRAINQSRNGGSDSCDINNDREHD) form a disordered region. Residues 1-236 (MHQDNSMRRA…RSNRLSFMSK (236 aa)) are Cytoplasmic-facing. Positions 11-24 (INQSRNGGSDSCDI) are enriched in polar residues. A helical transmembrane segment spans residues 237–255 (LKMYFNYFGPGWIVAIAYL). Over 256-288 (DPGNICGNLNVGLIRSDDFINVNSSVKDYTGYR) the chain is Vacuolar. Asn278 carries N-linked (GlcNAc...) asparagine glycosylation. The chain crosses the membrane as a helical span at residues 289–311 (LLWVLVYGHILGFIFHTLSMKLG). Residues 312–331 (HITGLDLAALCRKEFSSKFS) are Cytoplasmic-facing. The chain crosses the membrane as a helical span at residues 332-357 (YFLYICVQIAIWGAHLQAIIGVFVAI). Over 358-362 (NLILG) the chain is Vacuolar. A helical membrane pass occupies residues 363–382 (IPVKIAILYTLIEAFAYSFL). Over 383-393 (ENKSLDLLEKV) the chain is Cytoplasmic. Residues 394-416 (LSLLIGILVCCFMFNVFMTPINF) form a helical membrane-spanning segment. Over 417–435 (QEVASSILYPRIPKGKLLD) the chain is Vacuolar. The chain crosses the membrane as a helical span at residues 436–455 (TMGLLGSVISAHIFYLHSNL). Topologically, residues 456-475 (TSKKKPVIYNDRMVKRYNKL) are cytoplasmic. A helical membrane pass occupies residues 476 to 499 (GTIESGGSLLVSCITNCIIVLTFA). The Vacuolar portion of the chain corresponds to 500–529 (EVNISGDDRKADYNLFNAYDVMKKYFGKTS). Asn502 carries an N-linked (GlcNAc...) asparagine glycan. A helical transmembrane segment spans residues 530-546 (MYIWSFGLLSSGNNASF). Residues 547–566 (MCEYASKSVFEGFLNKNVNP) are Cytoplasmic-facing. Residues 567 to 585 (FFRVIFSRIILFIMLYAYV) form a helical membrane-spanning segment. Over 586 to 596 (SYDKYTIDQLS) the chain is Vacuolar. Residues 597–615 (NFINVVQILLLPLAIIPLY) form a helical membrane-spanning segment. Residues 616-634 (RFSIHKNVLGKFAIKGAFK) lie on the Cytoplasmic side of the membrane. The helical transmembrane segment at 635–657 (YLVFVLVISIIVANFLLTLFDFL) threads the bilayer. Residues 658–662 (QYAPS) are Vacuolar-facing. A helical transmembrane segment spans residues 663 to 684 (NLYVIFIFISSIFYLLFIIYFF). Residues 685–696 (NMPITKTYYKDS) lie on the Cytoplasmic side of the membrane.

The protein belongs to the NRAMP (TC 2.A.55) family.

It localises to the vacuole membrane. The catalysed reaction is Fe(2+)(in) = Fe(2+)(out). In terms of biological role, iron transporter. Required for parasite development during the blood stages. Required for full pathogenicity. This Plasmodium yoelii protein is Divalent metal transporter 1.